A 160-amino-acid chain; its full sequence is Monooxygenase AacuO (160 aa).

Belongs to the avfA family.

It functions in the pathway secondary metabolite biosynthesis. Its function is as follows. Monooxygenase; part of the gene cluster that mediates the biosynthesis of the tetrahydroxanthone dimer secalonic acid D. The pathway begins with the synthesis of atrochrysone thioester by the polyketide synthase AacuL. The atrochrysone carboxyl ACP thioesterase AacuM then breaks the thioester bond and releases the atrochrysone carboxylic acid from AacuL. Atrochrysone carboxylic acid is decarboxylated by the decarboxylase AacuI, and oxidized by the anthrone oxygenase AacuG to yield emodin. Emodin is then reduced to emodin hydroquinone by a yet unidentified oxidoreductase. A-ring reduction by the short chain dehydrogenase AacuN, dehydration by the scytalone dehydratase-like protein AacuK and probable spontaneous re-oxidation, results in overall deoxygenation to chrysophanol. Baeyer-Villiger oxidation by the Baeyer-Villiger monooxygenase (BVMO) AacuH then yields monodictyphenone. Monodictyphenone is transformed into compounds with the tetrahydroxanthone skeleton via methylesterification by the methyltransferase AacuQ, followed by the action of the flavin-dependent monooxygenase AacuC, the isomerase AacuP, and the short chain dehydrogenase/reductase AacuF or AacuD. AacuF and AacuD should accept the same compound as a substrate but perform the ketoreduction with a different stereoselectivity, thus yielding blennolides B and A, respectively. In the final step of the biosynthesis, the cytochrome P450 monooxygenase AacuE accepts blennolide B and/or blennolide A to conduct the dimerization reaction to furnish the tetrahydroxanthone dimers, secalonic acids D, B, and F. The polypeptide is Monooxygenase AacuO (Aspergillus aculeatus (strain ATCC 16872 / CBS 172.66 / WB 5094)).